Reading from the N-terminus, the 345-residue chain is Inositol 2-dehydrogenase (345 aa).

Belongs to the Gfo/Idh/MocA family. Homotetramer.

The catalysed reaction is myo-inositol + NAD(+) = scyllo-inosose + NADH + H(+). In terms of biological role, involved in the oxidation of myo-inositol (MI) to 2-keto-myo-inositol (2KMI or 2-inosose). This Mycolicibacterium smegmatis (strain ATCC 700084 / mc(2)155) (Mycobacterium smegmatis) protein is Inositol 2-dehydrogenase.